The primary structure comprises 243 residues: Type III pantothenate kinase (243 aa).

7–14 provides a ligand contact to ATP; it reads DLGNSRFK. Substrate-binding positions include tyrosine 91 and 98 to 101; that span reads GVDR. Aspartate 100 serves as the catalytic Proton acceptor. Residue threonine 122 coordinates ATP. Threonine 172 is a substrate binding site.

This sequence belongs to the type III pantothenate kinase family. Homodimer. NH4(+) serves as cofactor. K(+) is required as a cofactor.

It localises to the cytoplasm. The enzyme catalyses (R)-pantothenate + ATP = (R)-4'-phosphopantothenate + ADP + H(+). Its pathway is cofactor biosynthesis; coenzyme A biosynthesis; CoA from (R)-pantothenate: step 1/5. Functionally, catalyzes the phosphorylation of pantothenate (Pan), the first step in CoA biosynthesis. The chain is Type III pantothenate kinase from Stenotrophomonas maltophilia (strain K279a).